The following is a 179-amino-acid chain: Pyridoxal 5'-phosphate synthase subunit PdxT (179 aa).

48 to 50 contacts L-glutamine; sequence GES. The Nucleophile role is filled by C79. L-glutamine contacts are provided by residues R101 and 127–128; that span reads IR. Catalysis depends on charge relay system residues H163 and E165.

Belongs to the glutaminase PdxT/SNO family. In the presence of PdxS, forms a dodecamer of heterodimers. Only shows activity in the heterodimer.

The catalysed reaction is aldehydo-D-ribose 5-phosphate + D-glyceraldehyde 3-phosphate + L-glutamine = pyridoxal 5'-phosphate + L-glutamate + phosphate + 3 H2O + H(+). It carries out the reaction L-glutamine + H2O = L-glutamate + NH4(+). Its pathway is cofactor biosynthesis; pyridoxal 5'-phosphate biosynthesis. Catalyzes the hydrolysis of glutamine to glutamate and ammonia as part of the biosynthesis of pyridoxal 5'-phosphate. The resulting ammonia molecule is channeled to the active site of PdxS. The sequence is that of Pyridoxal 5'-phosphate synthase subunit PdxT from Francisella tularensis subsp. tularensis (strain FSC 198).